The primary structure comprises 433 residues: Zinc finger protein CONSTANS-LIKE 15 (433 aa).

C9, C12, C32, H37, C52, C55, C75, and H80 together coordinate Zn(2+). Residues 9–51 (CDFCGERTAVLFCRADTAKLCLPCDQQVHTANLLSRKHVRSQI) form a B box-type 1; atypical zinc finger. The B box-type 2; atypical zinc-finger motif lies at 52–94 (CDNCGNEPVSVRCFTDNLILCQECDWDVHGSCSVSDAHVRSAV). The interval 319 to 353 (DDYKRSTSGQVQPTKSESNNRPITFGSEKGSNSSS) is disordered. The span at 324 to 340 (STSGQVQPTKSESNNRP) shows a compositional bias: polar residues. Residues 374–398 (TKADLERLAQNRGDAMQRYKEKRKT) are a coiled coil. Residues 385 to 427 (RGDAMQRYKEKRKTRRYDKTIRYESRKARADTRLRVRGRFVKA) enclose the CCT domain.

Belongs to the CONSTANS family.

Its subcellular location is the nucleus. This is Zinc finger protein CONSTANS-LIKE 15 (COL15) from Arabidopsis thaliana (Mouse-ear cress).